Here is a 534-residue protein sequence, read N- to C-terminus: NAD(P)H-quinone oxidoreductase chain 4 2 (534 aa).

13 helical membrane passes run 6 to 26, 38 to 58, 93 to 113, 117 to 137, 138 to 158, 171 to 191, 210 to 230, 245 to 265, 279 to 299, 313 to 333, 335 to 355, 377 to 399, and 419 to 439; these read FPWL…IPLL, WYSL…FWTS, LILL…PVTF, FFYF…AVQD, LLVF…LLAI, FILY…AMAF, IGFQ…KLPI, TAPV…YALF, FAPI…LTSF, ISHM…GLSG, MLQM…VGAT, MFAM…GFVA, and VVVI…LLSM.

It belongs to the complex I subunit 4 family.

Its subcellular location is the cellular thylakoid membrane. It carries out the reaction a plastoquinone + NADH + (n+1) H(+)(in) = a plastoquinol + NAD(+) + n H(+)(out). It catalyses the reaction a plastoquinone + NADPH + (n+1) H(+)(in) = a plastoquinol + NADP(+) + n H(+)(out). In terms of biological role, NDH-1 shuttles electrons from NAD(P)H, via FMN and iron-sulfur (Fe-S) centers, to quinones in the respiratory chain. The immediate electron acceptor for the enzyme in this species is believed to be plastoquinone. Couples the redox reaction to proton translocation (for every two electrons transferred, four hydrogen ions are translocated across the cytoplasmic membrane), and thus conserves the redox energy in a proton gradient. In Synechococcus elongatus (strain ATCC 33912 / PCC 7942 / FACHB-805) (Anacystis nidulans R2), this protein is NAD(P)H-quinone oxidoreductase chain 4 2.